Consider the following 604-residue polypeptide: Glutamine--fructose-6-phosphate aminotransferase [isomerizing] (604 aa).

Cys2 functions as the Nucleophile; for GATase activity in the catalytic mechanism. One can recognise a Glutamine amidotransferase type-2 domain in the interval 2-218 (CGIVGVVGNR…DKELVILTKD (217 aa)). SIS domains lie at 284 to 423 (IITS…ANGK) and 452 to 594 (VAEK…VDKP). Lys599 serves as the catalytic For Fru-6P isomerization activity.

In terms of assembly, homodimer.

Its subcellular location is the cytoplasm. The enzyme catalyses D-fructose 6-phosphate + L-glutamine = D-glucosamine 6-phosphate + L-glutamate. Its function is as follows. Catalyzes the first step in hexosamine metabolism, converting fructose-6P into glucosamine-6P using glutamine as a nitrogen source. This Streptococcus pyogenes serotype M3 (strain ATCC BAA-595 / MGAS315) protein is Glutamine--fructose-6-phosphate aminotransferase [isomerizing].